A 221-amino-acid chain; its full sequence is Large ribosomal subunit protein uL3 (221 aa).

Positions 140-160 are disordered; the sequence is GGPKTHGSGFHRHAGSIGMRS.

Belongs to the universal ribosomal protein uL3 family. In terms of assembly, part of the 50S ribosomal subunit. Forms a cluster with proteins L14 and L19.

In terms of biological role, one of the primary rRNA binding proteins, it binds directly near the 3'-end of the 23S rRNA, where it nucleates assembly of the 50S subunit. The polypeptide is Large ribosomal subunit protein uL3 (Chlamydia caviae (strain ATCC VR-813 / DSM 19441 / 03DC25 / GPIC) (Chlamydophila caviae)).